The chain runs to 1622 residues: Transient receptor potential cation channel subfamily M member 1 (1622 aa).

Disordered regions lie at residues 1–25 (MGSMRKMSSSFKRGSIKSSTSGSQK), 64–95 (PPLPSGAPSTTGEDTKQADTQSGKWSVSKHTQ), 450–490 (LAPP…EVEE), 618–641 (LGMEDDEPPAKGKKKKKKKKEEEI), and 822–856 (SKENEDGKEKEEENVDANADAGSRKGDEENEHKKQ). Over 1–875 (MGSMRKMSSS…CEFYNAPIVK (875 aa)) the chain is Cytoplasmic. Residues 8–25 (SSSFKRGSIKSSTSGSQK) show a composition bias toward low complexity. The segment covering 70-95 (APSTTGEDTKQADTQSGKWSVSKHTQ) has biased composition (polar residues). Basic residues predominate over residues 472–483 (GRGKGKGKKKGK). 2 stretches are compositionally biased toward basic and acidic residues: residues 823 to 832 (KENEDGKEKE) and 843 to 853 (GSRKGDEENEH). The helical transmembrane segment at 876–896 (FWFYTISYLGYLLLFNYVILV) threads the bilayer. The Extracellular segment spans residues 897–942 (RMDGWPSPQEWIVISYIVSLALEKIREILMSEPGKLSQKIKVWLQE). A helical membrane pass occupies residues 943–963 (YWNITDLVAISMFMVGAILRL). Residues 964–973 (QSQPYMGYGR) are Cytoplasmic-facing. The helical transmembrane segment at 974-994 (VIYCVDIILWYIRVLDIFGVN) threads the bilayer. Over 995 to 1006 (KYLGPYVMMIGK) the chain is Extracellular. Residues 1007-1027 (MMIDMLYFVVIMLVVLMSFGV) traverse the membrane as a helical segment. Topologically, residues 1028–1099 (ARQAILHPEE…CIPGAWLTPA (72 aa)) are cytoplasmic. The helical transmembrane segment at 1100–1120 (LMACYLLVANILLVNLLIAVF) threads the bilayer. Asn-1121 carries N-linked (GlcNAc...) asparagine glycosylation. The Extracellular segment spans residues 1121-1150 (NNTFFEVKSISNQVWKFQRYQLIMTFHDRP). A helical membrane pass occupies residues 1151–1171 (VLPPPMIILSHIYIIIMRLSG). The Cytoplasmic segment spans residues 1172–1622 (RCRKKREGDQ…QEKRSAETEC (451 aa)). The stretch at 1224-1252 (DERIRVTSERVENMSMRLEEINERENFMK) forms a coiled coil. 3 disordered regions span residues 1354–1383 (EDAKSHLDQPSNLHHTPGPSPPATPGRSRL), 1389–1408 (LSTELRPGSDPGISAGEFDP), and 1567–1622 (CLRS…ETEC). Residues 1613–1622 (QEKRSAETEC) are compositionally biased toward basic and acidic residues.

It belongs to the transient receptor (TC 1.A.4) family. LTrpC subfamily. TRPM1 sub-subfamily. As to quaternary structure, homodimer. Interacts with TRPM3; the interaction results in the formation of a heteromultimeric cation channel complex that are functionally different from the homomeric channels. Interacts with GPR179. Associates with both guanine nucleotide-binding proteins G(o) and beta-gamma G protein dimer; implicated in directly regulating TRPM1 channel open-state. In terms of tissue distribution, expressed in the retina where it localizes on dendritic tips of ON bipolar cells. Specifically, it is expressed in retinal bipolar cells (BPCs) of the ON subtype. Not detected in brain, lung, liver, heart, kidney, spleen or small intestine. Also expressed at high levels in poorly metastatic variants of B16 melanoma and at much reduced levels in highly metastatic variants of B16 melanoma.

Its subcellular location is the cell membrane. It is found in the endoplasmic reticulum membrane. It localises to the cell projection. The protein resides in the axon. It carries out the reaction Ca(2+)(in) = Ca(2+)(out). The catalysed reaction is Mg(2+)(in) = Mg(2+)(out). The enzyme catalyses Mn(2+)(in) = Mn(2+)(out). It catalyses the reaction Ni(2+)(in) = Ni(2+)(out). With respect to regulation, inhibited by extracellular zinc ions. Inhibited by intracellular Mg(2+). Activated by the neuroactive steroid pregnenolone sulfate. Negatively regulated by activation of GRM6 receptors in the ON-bipolar cells. Constitutively open nonselective divalent cation-conducting channels which mediate the influx of Ca(2+), Mg(2+), Mn(2+), Ba(2+), and Ni(2+) into the cytoplasm, leading to membrane depolarization. Impermeable to zinc ions. In addition, forms heteromultimeric ion channels with TRPM3 which are permeable for calcium and zinc ions. Plays an essential role for the depolarizing photoresponse of retinal ON bipolar cells. In the dark, tonic release of glutamate activates the G-protein coupled receptor for glutamate (GRM6), its activation induces the release of G(o) and the beta-gamma G protein dimer. Both subunits can interact and inactivate the TRPM1 channel. A light onset, induces decrease in glutamate release and deactivation of GRM6 leading to channel opening and membrane depolarization. May play a role in metastasis suppression. The protein is Transient receptor potential cation channel subfamily M member 1 of Mus musculus (Mouse).